The sequence spans 569 residues: MSLWIPRQTYADLYGPTKGDRLRLADTELIIEIEHDFAHYGDEITFGGGKVIRDGMGQSSSAHDVLDLVITNAIIIDHWGIVKGDIGIKQGRIVKVGKAGNPDTMAGVDPELVVGANTEVIAGEHMIVTAGGIDSHIHFIAPGQIPEALSNGVTTLLGGGTGPATGTKATTCTPGVWNMARMLQAADAWPVNLGFLGKGNAAQPESLIQQIQAGACGLKLHEDWGTTPAAIDMCLSVADQYDVQVAIHTDTINEAGFLEDTIRAIAGRTIHTYHTEGAGGGHAPDIIKIAGERYVLPSSTNPTRPYTVNTIAEHLDMLMVCHHLNPQVPEDVAFAESRIRPETIAAEDILHDLGVISMISSDSQAMGRVGEVVTRTWQTAHKMKVQRGALLGDSARNDNQRVKRYIAKYTINPALAHGIAHEVGSIEPGKLADLVLWQPAFFGVKPEIIVKGGLIAWNAMGDANASIPTPQPVLYRPMFGAFGGALGATSLTFVSAAAHESGIGQQLNLQKVTSAVRGCRSVQKADLIHNNATPLIEVDPETYAVRADGELLTCEPATSLPLAQRYFLF.

A Urease domain is found at 131–569 (GGIDSHIHFI…LPLAQRYFLF (439 aa)). 3 residues coordinate Ni(2+): His136, His138, and Lys219. Lys219 is subject to N6-carboxylysine. His221 lines the substrate pocket. The Ni(2+) site is built by His248 and His274. His322 serves as the catalytic Proton donor. Asp362 is a binding site for Ni(2+).

The protein belongs to the metallo-dependent hydrolases superfamily. Urease alpha subunit family. As to quaternary structure, heterotrimer of UreA (gamma), UreB (beta) and UreC (alpha) subunits. Three heterotrimers associate to form the active enzyme. Ni cation is required as a cofactor. Carboxylation allows a single lysine to coordinate two nickel ions.

The protein resides in the cytoplasm. It carries out the reaction urea + 2 H2O + H(+) = hydrogencarbonate + 2 NH4(+). Its pathway is nitrogen metabolism; urea degradation; CO(2) and NH(3) from urea (urease route): step 1/1. This chain is Urease subunit alpha, found in Herpetosiphon aurantiacus (strain ATCC 23779 / DSM 785 / 114-95).